The chain runs to 188 residues: GTPase KRas (188 aa).

GTP is bound by residues 10 to 18 (GAGGVGKSA), 29 to 35 (VDEYDPT), 59 to 60 (AG), and 116 to 119 (NKCD). An Effector region motif is present at residues 32 to 40 (YDPTIEDSY). The tract at residues 168 to 188 (EKMSKDGKKKKKKTKTKCIIM) is disordered. Residue Cys-185 is modified to Cysteine methyl ester. Cys-185 carries the S-farnesyl cysteine lipid modification. Residues 186–188 (IIM) constitute a propeptide, removed in mature form.

The protein belongs to the small GTPase superfamily. Ras family.

The protein localises to the cell membrane. Its subcellular location is the cytoplasm. The catalysed reaction is GTP + H2O = GDP + phosphate + H(+). Alternates between an inactive form bound to GDP and an active form bound to GTP. Activated by a guanine nucleotide-exchange factor (GEF) and inactivated by a GTPase-activating protein (GAP). Ras proteins bind GDP/GTP and possess intrinsic GTPase activity. Plays an important role in the regulation of cell proliferation. May play a role in promoting oncogenic events by inducing transcriptional silencing of tumor suppressor genes (TSGs). The polypeptide is GTPase KRas (KRAS) (Meleagris gallopavo (Wild turkey)).